The following is a 219-amino-acid chain: MEKKITGYTTVDISQWHRKEHFEAFQSVAQCTYNQTVQLDITAFLKTVKKNKHKFYPAFIHILARLMNAHPEFRMAMKDGELVIWDSVHPCYTVFHEQTETFSSLWSEYHDDFRQFLHIYSQDVACYGENLAYFPKGFIENMFFVSANPWVSFTSFDLNVANMDNFFAPVFTMGKYYTQGDKVLMPLAIQVHHAVCDGFHVGRMLNELQQYCDEWQGGA.

The Proton acceptor role is filled by H193.

This sequence belongs to the chloramphenicol acetyltransferase family.

It carries out the reaction chloramphenicol + acetyl-CoA = chloramphenicol 3-acetate + CoA. This enzyme is an effector of chloramphenicol resistance in bacteria. In Acinetobacter calcoaceticus subsp. anitratus, this protein is Chloramphenicol acetyltransferase (cat).